Here is a 270-residue protein sequence, read N- to C-terminus: Glutamate racemase (270 aa).

Substrate-binding positions include 7–8 (DS) and 39–40 (YG). Cys-70 functions as the Proton donor/acceptor in the catalytic mechanism. 71–72 (NT) is a binding site for substrate. Cys-194 acts as the Proton donor/acceptor in catalysis. 195-196 (TH) provides a ligand contact to substrate.

The protein belongs to the aspartate/glutamate racemases family.

It catalyses the reaction L-glutamate = D-glutamate. It participates in cell wall biogenesis; peptidoglycan biosynthesis. In terms of biological role, provides the (R)-glutamate required for cell wall biosynthesis. The sequence is that of Glutamate racemase from Jannaschia sp. (strain CCS1).